The chain runs to 154 residues: Small ribosomal subunit protein uS15 (154 aa).

The disordered stretch occupies residues 1–23; sequence MNKKRDKGQSHSTRPARAGPPRW.

It belongs to the universal ribosomal protein uS15 family. As to quaternary structure, part of the 30S ribosomal subunit.

This Staphylothermus marinus (strain ATCC 43588 / DSM 3639 / JCM 9404 / F1) protein is Small ribosomal subunit protein uS15.